The primary structure comprises 129 residues: Large ribosomal subunit protein bL19 (129 aa).

Belongs to the bacterial ribosomal protein bL19 family.

This protein is located at the 30S-50S ribosomal subunit interface and may play a role in the structure and function of the aminoacyl-tRNA binding site. This is Large ribosomal subunit protein bL19 from Methylobacillus flagellatus (strain ATCC 51484 / DSM 6875 / VKM B-1610 / KT).